The following is a 154-amino-acid chain: Endoribonuclease YbeY (154 aa).

Zn(2+) contacts are provided by H115, H119, and H125.

This sequence belongs to the endoribonuclease YbeY family. Requires Zn(2+) as cofactor.

Its subcellular location is the cytoplasm. Its function is as follows. Single strand-specific metallo-endoribonuclease involved in late-stage 70S ribosome quality control and in maturation of the 3' terminus of the 16S rRNA. This chain is Endoribonuclease YbeY, found in Halorhodospira halophila (strain DSM 244 / SL1) (Ectothiorhodospira halophila (strain DSM 244 / SL1)).